The primary structure comprises 698 residues: Polyribonucleotide nucleotidyltransferase (698 aa).

The Mg(2+) site is built by D485 and D491. One can recognise a KH domain in the interval 552–611 (PRITTIKINPEKIRDVIGKGGAVIRALTEETGTTIELDDNGTVKIASSNGEATKEAIRRI). Residues 621 to 689 (GRIYNGKVIR…RQGRVRLSIK (69 aa)) form the S1 motif domain.

Belongs to the polyribonucleotide nucleotidyltransferase family. In terms of assembly, component of the RNA degradosome, which is a multiprotein complex involved in RNA processing and mRNA degradation. Mg(2+) serves as cofactor.

Its subcellular location is the cytoplasm. The enzyme catalyses RNA(n+1) + phosphate = RNA(n) + a ribonucleoside 5'-diphosphate. Involved in mRNA degradation. Catalyzes the phosphorolysis of single-stranded polyribonucleotides processively in the 3'- to 5'-direction. The polypeptide is Polyribonucleotide nucleotidyltransferase (Shewanella frigidimarina (strain NCIMB 400)).